A 90-amino-acid chain; its full sequence is Long neurotoxin 7 (90 aa).

An N-terminal signal peptide occupies residues 1–21; it reads MKTLLLTLVLVTIMCLDLGYT. Disulfide bonds link C24/C41, C35/C62, C47/C51, C66/C77, and C78/C83.

It belongs to the three-finger toxin family. Long-chain subfamily. Type II alpha-neurotoxin sub-subfamily. Expressed by the venom gland.

It localises to the secreted. Binds with high affinity to muscular (alpha-1/CHRNA1) and neuronal (alpha-7/CHRNA7) nicotinic acetylcholine receptor (nAChR) and inhibits acetylcholine from binding to the receptor, thereby impairing neuromuscular and neuronal transmission. The polypeptide is Long neurotoxin 7 (Naja sputatrix (Malayan spitting cobra)).